A 503-amino-acid polypeptide reads, in one-letter code: N-fatty-acyl-amino acid synthase/hydrolase PM20D1 (503 aa).

The N-terminal stretch at 1-24 (MAELLASLPAWAAVLLLFFATVSG) is a signal peptide. Residue N72 is glycosylated (N-linked (GlcNAc...) asparagine). H125 contributes to the Zn(2+) binding site. The active site involves D127. D157 contributes to the Zn(2+) binding site. E191 acts as the Proton acceptor in catalysis. E192 and D218 together coordinate Zn(2+). N-linked (GlcNAc...) asparagine glycosylation occurs at N443. A Zn(2+)-binding site is contributed by H465.

This sequence belongs to the peptidase M20A family. Requires Zn(2+) as cofactor. In addition to being detected in blood (at protein level), PM20D1 is also highly expressed in other tissues including brown adipocytes, liver and kidney. It is also expressed in small intestine, large intestine, heart and pancreas.

The protein resides in the secreted. The enzyme catalyses an N-acyl-L-amino acid + H2O = an L-alpha-amino acid + a carboxylate. It carries out the reaction an N-acyl-aromatic L-alpha-amino acid + H2O = an aromatic L-alpha-amino acid + a carboxylate. It catalyses the reaction N-(5Z,8Z,11Z,14Z)-eicosatetraenoyl-glycine + H2O = (5Z,8Z,11Z,14Z)-eicosatetraenoate + glycine. The catalysed reaction is N-hexadecanoyl-L-phenylalanine + H2O = hexadecanoate + L-phenylalanine. The enzyme catalyses N-octadecanoyl-L-phenylalanine + H2O = octadecanoate + L-phenylalanine. It carries out the reaction N-(4Z,7Z,10Z,13Z,16Z,19Z-docosahexaenoyl)-L-phenylalanine + H2O = (4Z,7Z,10Z,13Z,16Z,19Z)-docosahexaenoate + L-phenylalanine. It catalyses the reaction N-(9Z-octadecenoyl)-L-asparagine + H2O = L-asparagine + (9Z)-octadecenoate. The catalysed reaction is (9Z)-octadecenoate + glycine = N-(9Z-octadecenoyl)glycine + H2O. The enzyme catalyses N-(9Z-octadecenoyl)-L-lysine + H2O = L-lysine + (9Z)-octadecenoate. It carries out the reaction N-(9Z-octadecenoyl)-L-methionine + H2O = (9Z)-octadecenoate + L-methionine. It catalyses the reaction N-(9Z-octadecenoyl)-L-serine + H2O = L-serine + (9Z)-octadecenoate. The catalysed reaction is N-(9Z-octadecenoyl)-L-tryptophan + H2O = L-tryptophan + (9Z)-octadecenoate. The enzyme catalyses N-(9Z-octadecenoyl)-L-tyrosine + H2O = L-tyrosine + (9Z)-octadecenoate. It carries out the reaction N-(9Z-octadecenoyl)-L-glutamine + H2O = L-glutamine + (9Z)-octadecenoate. It catalyses the reaction N-(5Z,8Z,11Z,14Z-eicosatetraenoyl)-L-serine + H2O = (5Z,8Z,11Z,14Z)-eicosatetraenoate + L-serine. The catalysed reaction is (5Z,8Z,11Z,14Z)-eicosatetraenoate + L-phenylalanine = N-(5Z,8Z,11Z,14Z-eicosatetraenoyl)-L-phenylalanine + H2O. The enzyme catalyses N-(9Z-octadecenoyl)-L-leucine + H2O = L-leucine + (9Z)-octadecenoate. It carries out the reaction L-phenylalanine + (9Z)-octadecenoate = N-(9Z-octadecenoyl)-L-phenylalanine + H2O. Its pathway is amino-acid metabolism. It participates in energy metabolism; electron transfer. The protein operates within lipid metabolism; fatty acid metabolism. Its activity is regulated as follows. Lipoproteins are powerful coactivators of PM20D1 activity in vitro and NAA biosynthesis in vivo. In terms of biological role, secreted enzyme that regulates the endogenous N-fatty acyl amino acid (NAAs) tissue and circulating levels by functioning as a bidirectional NAA synthase/hydrolase. It condenses free fatty acids and free amino acids to generate NAAs and bidirectionally catalyzes the reverse hydrolysis reaction. Some of these NAAs stimulate oxidative metabolism via mitochondrial uncoupling, increasing energy expenditure in a UPC1-independent manner. Thereby, this secreted protein may indirectly regulate whole body energy expenditure. PM20D1 circulates in tight association with both low- and high-density (LDL and HDL,respectively) lipoprotein particles. This chain is N-fatty-acyl-amino acid synthase/hydrolase PM20D1, found in Mus musculus (Mouse).